The primary structure comprises 350 residues: Protein RecA (350 aa).

Glycine 67–threonine 74 lines the ATP pocket.

It belongs to the RecA family.

The protein resides in the cytoplasm. Functionally, can catalyze the hydrolysis of ATP in the presence of single-stranded DNA, the ATP-dependent uptake of single-stranded DNA by duplex DNA, and the ATP-dependent hybridization of homologous single-stranded DNAs. It interacts with LexA causing its activation and leading to its autocatalytic cleavage. In Chlamydia caviae (strain ATCC VR-813 / DSM 19441 / 03DC25 / GPIC) (Chlamydophila caviae), this protein is Protein RecA.